A 569-amino-acid chain; its full sequence is Urease subunit alpha (569 aa).

The 439-residue stretch at 131 to 569 (GGFDSHIHFI…LPMAQRYFLF (439 aa)) folds into the Urease domain. Positions 136, 138, and 219 each coordinate Ni(2+). Lys-219 carries the post-translational modification N6-carboxylysine. Position 221 (His-221) interacts with substrate. Ni(2+)-binding residues include His-248 and His-274. His-322 serves as the catalytic Proton donor. Residue Asp-362 participates in Ni(2+) binding.

The protein belongs to the metallo-dependent hydrolases superfamily. Urease alpha subunit family. Heterotrimer of UreA (gamma), UreB (beta) and UreC (alpha) subunits. Three heterotrimers associate to form the active enzyme. The cofactor is Ni cation. Post-translationally, carboxylation allows a single lysine to coordinate two nickel ions.

The protein resides in the cytoplasm. The enzyme catalyses urea + 2 H2O + H(+) = hydrogencarbonate + 2 NH4(+). It functions in the pathway nitrogen metabolism; urea degradation; CO(2) and NH(3) from urea (urease route): step 1/1. The protein is Urease subunit alpha of Ruegeria pomeroyi (strain ATCC 700808 / DSM 15171 / DSS-3) (Silicibacter pomeroyi).